Consider the following 145-residue polypeptide: D-aminoacyl-tRNA deacylase (145 aa).

Positions 137–138 (GP) match the Gly-cisPro motif, important for rejection of L-amino acids motif.

The protein belongs to the DTD family. As to quaternary structure, homodimer.

Its subcellular location is the cytoplasm. The enzyme catalyses glycyl-tRNA(Ala) + H2O = tRNA(Ala) + glycine + H(+). It carries out the reaction a D-aminoacyl-tRNA + H2O = a tRNA + a D-alpha-amino acid + H(+). An aminoacyl-tRNA editing enzyme that deacylates mischarged D-aminoacyl-tRNAs. Also deacylates mischarged glycyl-tRNA(Ala), protecting cells against glycine mischarging by AlaRS. Acts via tRNA-based rather than protein-based catalysis; rejects L-amino acids rather than detecting D-amino acids in the active site. By recycling D-aminoacyl-tRNA to D-amino acids and free tRNA molecules, this enzyme counteracts the toxicity associated with the formation of D-aminoacyl-tRNA entities in vivo and helps enforce protein L-homochirality. The polypeptide is D-aminoacyl-tRNA deacylase (Rhodopirellula baltica (strain DSM 10527 / NCIMB 13988 / SH1)).